Here is a 340-residue protein sequence, read N- to C-terminus: Ephrin-B3 (340 aa).

A signal peptide spans 1–27; sequence MGAPHFGPGGVQVGALLLLGFAGLVSG. The Ephrin RBD domain maps to 28-167; that stretch reads LSLEPVYWNS…TRGMKVLLRV (140 aa). The Extracellular segment spans residues 28–227; sequence LSLEPVYWNS…GPLPPPSMPA (200 aa). Intrachain disulfides connect cysteine 62–cysteine 104 and cysteine 92–cysteine 156. Residues 168 to 227 are disordered; sequence GQSPRGGAVPRKPVSEMPMERDRGAAHSAEPGRDTIPGDPSSNATSRGAEGPLPPPSMPA. The segment covering 185 to 200 has biased composition (basic and acidic residues); it reads PMERDRGAAHSAEPGR. Asparagine 210 carries N-linked (GlcNAc...) asparagine glycosylation. Residues 228 to 248 form a helical membrane-spanning segment; that stretch reads VAGAAGGMALLLLGVAGAGGA. Topologically, residues 249-340 are cytoplasmic; the sequence is MCWRRRRAKP…QSPPNIYYKV (92 aa). Residues 254 to 300 form a disordered region; sequence RRAKPSESRHPGPGSFGRGGSLGLGGGGGMGPREAEPGELGIALRGG. Residues 267 to 284 show a composition bias toward gly residues; it reads GSFGRGGSLGLGGGGGMG. Arginine 271 carries the post-translational modification Omega-N-methylarginine. Serine 274 carries the phosphoserine modification. Residues 338–340 carry the PDZ-binding motif; that stretch reads YKV.

It belongs to the ephrin family. Interacts with GRIP1 and GRIP2. As to expression, expressed on lateral floor plate cells, specifically on commissural axon segments that have passed through the floor plate. Expressed in cells of the retinal ganglion cell layer during retinal axon guidance to the optic disk. Expressed in myogenic progenitor cells.

It localises to the membrane. Cell surface transmembrane ligand for Eph receptors, a family of receptor tyrosine kinases which are crucial for migration, repulsion and adhesion during neuronal, vascular and epithelial development. Binds promiscuously Eph receptors residing on adjacent cells, leading to contact-dependent bidirectional signaling into neighboring cells. The signaling pathway downstream of the receptor is referred to as forward signaling while the signaling pathway downstream of the ephrin ligand is referred to as reverse signaling. May play a pivotal role in forebrain function. Binds to, and induce the collapse of, commissural axons/growth cones in vitro. May play a role in constraining the orientation of longitudinally projecting axons. This Mus musculus (Mouse) protein is Ephrin-B3 (Efnb3).